The sequence spans 294 residues: tRNA pseudouridine synthase B (294 aa).

D39 serves as the catalytic Nucleophile.

The protein belongs to the pseudouridine synthase TruB family. Type 1 subfamily.

The catalysed reaction is uridine(55) in tRNA = pseudouridine(55) in tRNA. Responsible for synthesis of pseudouridine from uracil-55 in the psi GC loop of transfer RNAs. The sequence is that of tRNA pseudouridine synthase B from Streptococcus pyogenes serotype M2 (strain MGAS10270).